The following is a 333-amino-acid chain: Probable cytosolic iron-sulfur protein assembly protein ciao1-B (333 aa).

7 WD repeats span residues 14–53 (HPDS…WECK), 59–98 (GHQR…FECL), 103–142 (GHEN…EYEC), 148–187 (SHTQ…WECR), 192–231 (GHTS…GGQE), 246–285 (FHGR…DPDQ), and 297–333 (AHTQ…QSGV).

Belongs to the WD repeat CIA1 family. As to quaternary structure, component of the CIA complex.

Key component of the cytosolic iron-sulfur protein assembly (CIA) complex, a multiprotein complex that mediates the incorporation of iron-sulfur cluster into extramitochondrial Fe/S proteins. This Salmo salar (Atlantic salmon) protein is Probable cytosolic iron-sulfur protein assembly protein ciao1-B (ciao1b).